The sequence spans 77 residues: UPF0337 protein CE0198 (77 aa).

The segment at 1–77 is disordered; that stretch reads MGDLSNKAEG…PDVEHPEAVN (77 aa). Composition is skewed to basic and acidic residues over residues 30 to 56 and 64 to 77; these read DEGR…KDGA and QDKD…EAVN.

The protein belongs to the UPF0337 (CsbD) family.

This chain is UPF0337 protein CE0198, found in Corynebacterium efficiens (strain DSM 44549 / YS-314 / AJ 12310 / JCM 11189 / NBRC 100395).